We begin with the raw amino-acid sequence, 180 residues long: Large ribosomal subunit protein uL18m (180 aa).

The protein belongs to the universal ribosomal protein uL18 family. In terms of assembly, component of the mitochondrial ribosome large subunit (39S) which comprises a 16S rRNA and about 50 distinct proteins.

Its subcellular location is the mitochondrion. Its function is as follows. Together with thiosulfate sulfurtransferase (TST), acts as a mitochondrial import factor for the cytosolic 5S rRNA. The precursor form shows RNA chaperone activity; is able to fold the 5S rRNA into an import-competent conformation that is recognized by rhodanese (TST). Both the cytoplasmic and mitochondrial forms are able to bind to the helix IV-loop D in the gamma domain of the 5S rRNA. This Mus musculus (Mouse) protein is Large ribosomal subunit protein uL18m (Mrpl18).